A 739-amino-acid chain; its full sequence is Nucleoprotein (739 aa).

Residues 334 to 363 adopt a coiled-coil conformation; that stretch reads VNVGEQYQQLREAATEAEKQLQQYAESREL. Positions 415-646 are disordered; sequence PKTSGHYDDD…QDSDNTQPEH (232 aa). 2 stretches are compositionally biased toward low complexity: residues 449 to 458 and 504 to 514; these read SQDTTIPDVV and KGGQQKNSQKG. Over residues 520–530 the composition is skewed to polar residues; that stretch reads RQTQSRPTQNV. Residues 567 to 579 are compositionally biased toward acidic residues; that stretch reads EEADPLDDADDET. Basic and acidic residues predominate over residues 611–638; that stretch reads YRDHSEKRELPQDEQQDQDHTQEARNQD.

It belongs to the filoviruses nucleoprotein family. Homooligomer. Homomultimerizes to form the nucleocapsid. Binds to viral genomic RNA. Interacts with VP35 and VP30 to form the nucleocapsid. Interacts with host PPP2R5C; this interaction leads to VP30 dephosphorylation and viral transcription. Interacts with VP24; this interaction facilitates nucleocapsid assembly and genome packaging. Interacts with matrix protein VP40; this interaction allows recruitment of the nucleocapsid into progeny virions. Interacts with host STAU1. Interacts with host NXF1 (via RNA-binding domain); this interaction recruits NXF1 to the inclusion bodies were viral replication takes place, probably to export viral mRNA-NXF1 complexes from these sites. Interacts with host CCDC92; this interaction sequesters NP in the host cytoplasm. Interacts with host TRIM14. Phosphorylated and O-glycosylated by host. Acetylated by host EP300 in vitro.

It localises to the virion. The protein resides in the host cytoplasm. In terms of biological role, oligomerizes into helical capsid to encapsidate the viral genome, protecting it from nucleases and the cellular innate immune response. VP35 binds to and stabilizes monomeric NP, keeping it soluble. Upon virus replication, NP is recruited to bind cooperatively viral genomic RNA and VP35 is released. The encapsidated genomic RNA is termed the nucleocapsid and serves as template for transcription and replication. The nucleocapsid is helical with a pitch of 10.81 NP per turn and a diameter of about 22nm. Each NP binds to six nucleotides of viral genomic RNA, three being exposed to the solvant and three hidden into the nucleocapsid. Also recruits host PPP2R5C phosphatase to dephosphorylate VP30 and thereby promote viral transcription. Upon virion assembly and budding, NP binds to VP24 and possibly host STAU1. This Epomops franqueti (Franquet's epauletted fruit bat) protein is Nucleoprotein (NP).